The primary structure comprises 645 residues: Translation factor GUF1 homolog, mitochondrial (645 aa).

Residues 40–215 enclose the tr-type G domain; the sequence is DKIRNFGIVA…AIIDRVPAPT (176 aa). GTP contacts are provided by residues 49-56, 108-112, and 162-165; these read AHVDHGKS, DTPGH, and NKID.

The protein belongs to the TRAFAC class translation factor GTPase superfamily. Classic translation factor GTPase family. LepA subfamily.

It localises to the mitochondrion inner membrane. It catalyses the reaction GTP + H2O = GDP + phosphate + H(+). In terms of biological role, promotes mitochondrial protein synthesis. May act as a fidelity factor of the translation reaction, by catalyzing a one-codon backward translocation of tRNAs on improperly translocated ribosomes. Binds to mitochondrial ribosomes in a GTP-dependent manner. This Caenorhabditis elegans protein is Translation factor GUF1 homolog, mitochondrial.